A 231-amino-acid polypeptide reads, in one-letter code: Eukaryotic translation initiation factor 4E-1 (231 aa).

The segment at 1-55 (MVVEDTQKSSITDDQITANPNNENEDLEEGEILDDDDSSATSRPPSSSGALARNP) is disordered. A compositionally biased stretch (polar residues) spans 8–18 (KSSITDDQITA). The segment covering 23–38 (ENEDLEEGEILDDDDS) has biased composition (acidic residues). Over residues 39-48 (SATSRPPSSS) the composition is skewed to low complexity. 2 EIF4G-binding regions span residues 56 to 59 (HPLE) and 66 to 102 (FDNP…NNIH). Residues 74 to 79 (KQAAWG), Lys106, and 124 to 125 (WE) each bind mRNA. A disulfide bond links Cys129 and Cys167. The interval 150–159 (YTLLGMIGEQ) is EIF4G-binding. MRNA contacts are provided by residues 174–179 (RNRQEK) and 219–223 (KKHDR).

Belongs to the eukaryotic initiation factor 4E family. EIF4F is a multi-subunit complex, the composition of which varies with external and internal environmental conditions. It is composed of at least EIF4A, EIF4E and EIF4G. EIF4E is also known to interact with other partners. In higher plants two isoforms of EIF4F have been identified, named isoform EIF4F and isoform EIF(iso)4F. Isoform EIF4F has subunits p220 and p26, whereas isoform EIF(iso)4F has subunits p82 and p28. In terms of assembly, (Microbial infection) Interacts with potyvirus peanut stripe virus (PStV) helper component proteinase (HC-Pro) in the cytoplasm and with PStV viral genome-linked protein (VPg) in the nucleus; these interactions are possible in susceptible hosts but impaired in resistant plants. In terms of processing, according to the redox status, the Cys-129-Cys-167 disulfide bridge may have a role in regulating protein function by affecting its ability to bind capped mRNA. As to expression, expressed ubiquitously with highest levels in young leaves and roots, and lowest levels in flowers.

The protein localises to the nucleus. Its subcellular location is the cytoplasm. Component of the protein complex eIF4F, which is involved in the recognition of the mRNA cap, ATP-dependent unwinding of 5'-terminal secondary structure and recruitment of mRNA to the ribosome. Recognizes and binds the 7-methylguanosine-containing mRNA cap during an early step in the initiation of protein synthesis and facilitates ribosome binding by inducing the unwinding of the mRNAs secondary structures. Key component of recessive resistance to potyviruses such as peanut stripe virus (PStV). In terms of biological role, (Microbial infection) Susceptibility host factor required for viral infection by recruiting viral RNAs to the host ribosomal complex via an interaction with viral genome-linked protein (VPg). This Arachis hypogaea (Peanut) protein is Eukaryotic translation initiation factor 4E-1.